A 419-amino-acid chain; its full sequence is LWamide neuropeptides (419 aa).

The N-terminal stretch at 1–27 (MEKEMRNLMLLVLLTVILDNGIGKCNA) is a signal peptide. The disordered stretch occupies residues 27–48 (AKSEEDQDGNARNNRIDKNDDN). Positions 28–104 (KSEEDQDGNA…ENLDIDSTVQ (77 aa)) are excised as a propeptide. Tryptophan 110 bears the Tryptophan amide mark. A propeptide spanning residues 113–140 (EADFDNTRAHDSAQISDEKQSGLWVGDA) is cleaved from the precursor. Residues 120 to 132 (RAHDSAQISDEKQ) show a composition bias toward basic and acidic residues. Positions 120–332 (RAHDSAQISD…PGLWGRQVED (213 aa)) are disordered. Tryptophan 146 is modified (tryptophan amide). Positions 149–150 (DA) are excised as a propeptide. Residue tryptophan 156 is modified to Tryptophan amide. A propeptide spanning residues 159-160 (DA) is cleaved from the precursor. The residue at position 166 (tryptophan 166) is a Tryptophan amide. Positions 169–170 (DA) are excised as a propeptide. Tryptophan 176 carries the post-translational modification Tryptophan amide. A propeptide spanning residues 179 to 180 (DA) is cleaved from the precursor. At tryptophan 186 the chain carries Tryptophan amide. Positions 189-190 (DA) are excised as a propeptide. Residue tryptophan 196 is modified to Tryptophan amide. Positions 199-200 (DA) are excised as a propeptide. Tryptophan amide is present on tryptophan 206. A propeptide spanning residues 209–210 (DA) is cleaved from the precursor. Tryptophan 216 carries the post-translational modification Tryptophan amide. The propeptide at 218-220 (GDA) is seems to have a sequencing error or a mutation in position 218; Gly instead of Arg. Tryptophan 226 carries the post-translational modification Tryptophan amide. The propeptide occupies 229–230 (DA). At tryptophan 236 the chain carries Tryptophan amide. A propeptide spanning residues 239-240 (DA) is cleaved from the precursor. Position 246 is a tryptophan amide (tryptophan 246). The propeptide occupies 249-250 (DA). Tryptophan 256 is modified (tryptophan amide). A propeptide spanning residues 259–260 (DA) is cleaved from the precursor. A Tryptophan amide modification is found at tryptophan 266. Positions 269-270 (DA) are excised as a propeptide. Position 276 is a tryptophan amide (tryptophan 276). The propeptide occupies 279-280 (DT). Tryptophan 286 is modified (tryptophan amide). The propeptide occupies 289-290 (DA). Tryptophan 296 carries the post-translational modification Tryptophan amide. 2 consecutive propeptides follow at residues 299 to 300 (DA) and 309 to 320 (DNNVIKSRSDDA). The residue at position 326 (tryptophan 326) is a Tryptophan amide. A propeptide spanning residues 329-419 (QVEDGPTKIW…RRNNKKNNKF (91 aa)) is cleaved from the precursor.

It belongs to the LWamide neuropeptide family. As to expression, in planula larvae, expressed in a narrow ring of ectodermal neurosensory cells around the widest circumference at the anterior of the larvae. In primary polyps, expression is confined to endodermal cells of the hypostome. In mature polyps, expression is strong in the epidermis from the tentacle level to the base of the polyp and weak in the gastrodermal cells in the apical hypostome.

The protein resides in the secreted. Its function is as follows. LWamide peptides may be involved in induction of metamorphosis. The polypeptide is LWamide neuropeptides (Hydractinia echinata (Snail fur)).